Consider the following 473-residue polypeptide: GTPase Der (473 aa).

EngA-type G domains follow at residues Phe-3–Arg-167 and Leu-203–Asn-378. Residues Gly-9–Ser-16, Asp-56–Leu-60, Asn-119–Glu-122, Gly-209–Ser-216, Asp-256–Met-260, and Asn-321–Asp-324 each bind GTP. The KH-like domain maps to Lys-379–Asp-463.

Belongs to the TRAFAC class TrmE-Era-EngA-EngB-Septin-like GTPase superfamily. EngA (Der) GTPase family. In terms of assembly, associates with the 50S ribosomal subunit.

Functionally, GTPase that plays an essential role in the late steps of ribosome biogenesis. The protein is GTPase Der of Rhizobium etli (strain ATCC 51251 / DSM 11541 / JCM 21823 / NBRC 15573 / CFN 42).